We begin with the raw amino-acid sequence, 533 residues long: Adenosine deaminase (533 aa).

A signal peptide spans 1 to 19 (MKILLAVVFVLNLTNLAVP).

Belongs to the metallo-dependent hydrolases superfamily. Adenosine and AMP deaminases family. ADGF subfamily. The cofactor is Zn(2+). In terms of processing, proteolytically cleaved by human mast cell tryptase and chymase. In terms of tissue distribution, female salivary gland (at protein level).

The protein resides in the secreted. It catalyses the reaction adenosine + H2O + H(+) = inosine + NH4(+). The enzyme catalyses 2'-deoxyadenosine + H2O + H(+) = 2'-deoxyinosine + NH4(+). Catalyzes the deamination of adenosine to inosine and deoxyadenosine to deoxyinosine. Induces degranulation of host mast cells, and secretion of tryptase and IL6. Modulates enzymatic activities of human tryptase and chymase. Induces release of cytokines, such as IL1B, IL6, TNF, CCL2, IFN-beta (INFB1) and ISG15, from host monocytes and macrophages. Activates host NF-kappa-B signaling pathway in TAK1/MAP3K7-dependent manner. Functionally, (Microbial infection) Promotes replication of dengue virus type 2 in host cells probably via modulation of cytokine production in host macrophages and monocytes. This chain is Adenosine deaminase, found in Aedes albopictus (Asian tiger mosquito).